A 705-amino-acid polypeptide reads, in one-letter code: Catalase C (705 aa).

The segment at 1–31 is disordered; the sequence is MAKKPSAPNNTKPATIHDQKATRGNGGELHQ. Residues His88 and Asn161 contribute to the active site. Tyr375 provides a ligand contact to heme.

It belongs to the catalase family. HPII subfamily. Heme serves as cofactor.

It carries out the reaction 2 H2O2 = O2 + 2 H2O. Decomposes hydrogen peroxide into water and oxygen; serves to protect cells from the toxic effects of hydrogen peroxide. Could protect cells in nodules which have a high potential to produce hydrogen peroxide because of the strong reducing conditions required for nitrogen fixation and the action of several proteins. The protein is Catalase C (katE) of Rhizobium meliloti (strain 1021) (Ensifer meliloti).